The primary structure comprises 46 residues: Phoratoxin (46 aa).

3 disulfide bridges follow: Cys3/Cys40, Cys4/Cys32, and Cys16/Cys26. His46 is subject to Blocked carboxyl end (His).

This sequence belongs to the plant thionin (TC 1.C.44) family.

It localises to the secreted. Thionins are small plant proteins which are toxic to animal cells. They seem to exert their toxic effect at the level of the cell membrane. Their precise function is not known. This Phoradendron leucarpum subsp. tomentosum (California mistletoe) protein is Phoratoxin.